A 395-amino-acid polypeptide reads, in one-letter code: Leukosialin (395 aa).

Positions 1–19 (MALHLLLLFGACWVQVASP) are cleaved as a signal peptide. Residues 20–248 (DSLQRTTMLP…TRSPSQESSG (229 aa)) are Extracellular-facing. The span at 27–56 (MLPSTPHITAPSTSEAQNASPSVSVGSGTV) shows a compositional bias: polar residues. The interval 27 to 245 (MLPSTPHITA…PITTRSPSQE (219 aa)) is disordered. The segment covering 73–88 (SLTPLETTELSSLETS) has biased composition (low complexity). Polar residues-rich tracts occupy residues 89–111 (AGAS…SKTS) and 145–154 (TAASTSISKG). Residues 155–166 (TSAPPTTVTTSS) are compositionally biased toward low complexity. Asn167 is a glycosylation site (N-linked (GlcNAc...) asparagine). The segment covering 167 to 196 (NETSGPSVATTVSSKTSGPPVTTATGSLGP) has biased composition (polar residues). Positions 205 to 241 (ATTATSSVESSSVARGTSVSSRKTSTTSTQDPITTRS) are enriched in low complexity. The chain crosses the membrane as a helical span at residues 249 to 271 (MLLVPMLIALVVVLALVALLLLW). A required for interaction with EZR, MSN and RDX and for co-localization to microvilli region spans residues 272–302 (RQRQKRRTGALTLSGGGKRNGVVDAWAGPAR). The Cytoplasmic segment spans residues 272–395 (RQRQKRRTGA…AKDEAAPQSL (124 aa)). A Nuclear localization signal motif is present at residues 276–290 (KRRTGALTLSGGGKR). Residues Ser285 and Ser328 each carry the phosphoserine modification. Residues 303–395 (VPDEEATTTS…AKDEAAPQSL (93 aa)) are disordered. The span at 327-338 (GSGQRPTLTTFF) shows a compositional bias: polar residues. At Thr333 the chain carries Phosphothreonine. A phosphoserine mark is found at Ser339 and Ser343. The residue at position 347 (Ser347) is a Phosphoserine; by PKC/PRKCQ. Ser371 is subject to Phosphoserine. Position 378 is a phosphothreonine (Thr378). Residues 385 to 395 (QAKDEAAPQSL) are compositionally biased toward basic and acidic residues.

As to quaternary structure, interacts with SIGLEC1. In terms of assembly, interacts with isoform 2 of HIPK2. Interacts with CTNNB1. Interacts with RDX (via FERM domain). Interacts with EZR. Interacts with MSN. Post-translationally, phosphorylation at Ser-347 is regulated by chemokines, requires its association with ERM proteins (EZR, RDX and MSN) and is essential for its function in the regulation of T-cell trafficking to lymph nodes. In terms of processing, has a high content of sialic acid and O-linked carbohydrate structures. Cleavage by CTSG releases its extracellular domain and triggers its intramembrane proteolysis by gamma-secretase releasing the CD43 cytoplasmic tail chain (CD43-ct) which translocates to the nucleus. Post-translationally, sumoylated. In terms of tissue distribution, cell surface of thymocytes, T-lymphocytes, neutrophils, plasma cells and myelomas.

The protein resides in the membrane. It is found in the cell projection. The protein localises to the microvillus. Its subcellular location is the uropodium. It localises to the nucleus. The protein resides in the PML body. Predominant cell surface sialoprotein of leukocytes which regulates multiple T-cell functions, including T-cell activation, proliferation, differentiation, trafficking and migration. Positively regulates T-cell trafficking to lymph-nodes via its association with ERM proteins (EZR, RDX and MSN). Negatively regulates Th2 cell differentiation and predisposes the differentiation of T-cells towards a Th1 lineage commitment. Promotes the expression of IFN-gamma by T-cells during T-cell receptor (TCR) activation of naive cells and induces the expression of IFN-gamma by CD4(+) T-cells and to a lesser extent by CD8(+) T-cells. Plays a role in preparing T-cells for cytokine sensing and differentiation into effector cells by inducing the expression of cytokine receptors IFNGR and IL4R, promoting IFNGR and IL4R signaling and by mediating the clustering of IFNGR with TCR. Acts as a major E-selectin ligand responsible for Th17 cell rolling on activated vasculature and recruitment during inflammation. Mediates Th17 cells, but not Th1 cells, adhesion to E-selectin. Acts as a T-cell counter-receptor for SIGLEC1. In terms of biological role, protects cells from apoptotic signals, promoting cell survival. The sequence is that of Leukosialin (Spn) from Mus musculus (Mouse).